Reading from the N-terminus, the 216-residue chain is uncharacterized protein (216 aa).

Helical transmembrane passes span Ile5–Ser27, Phe98–Leu120, Val125–Asn147, and Gly185–Gly207.

The protein resides in the cell membrane. This is an uncharacterized protein from Aquifex aeolicus (strain VF5).